Consider the following 316-residue polypeptide: MKKEAIILLNMGGPNNLEEVEVFLTNMFNDKNIITVKSSLLRKLIATLITFSRTEKSQEIYNQIGGKSPIVGHTKKLVEKLQNRVGENIIVDFAMRYTPPFVSEAIERLSDKNIEKIYLIPLYPQYSTTTTKSSLEDFEEQYHLSSGDAILVEIKHFFQNKNYNMAILERIKERVSLEEMSEFDLIFSAHGLPLKVIQRGDTYQLHVQKHISILEQMMQKEGMTFKNIHLAYQSKVGPMEWLKPSLEDKLREIKNRKVIIFPIAFTIDNSETDYELEIEYREVAHEMGYEEYRVCRCPNDSEYFVEALVDIYAKMR.

Residues H190 and E271 each contribute to the Fe cation site.

Belongs to the ferrochelatase family.

Its subcellular location is the cytoplasm. The catalysed reaction is heme b + 2 H(+) = protoporphyrin IX + Fe(2+). Its pathway is porphyrin-containing compound metabolism; protoheme biosynthesis; protoheme from protoporphyrin-IX: step 1/1. Catalyzes the ferrous insertion into protoporphyrin IX. This Sulfurimonas denitrificans (strain ATCC 33889 / DSM 1251) (Thiomicrospira denitrificans (strain ATCC 33889 / DSM 1251)) protein is Ferrochelatase.